Consider the following 299-residue polypeptide: NAD kinase 1 (299 aa).

Asp62 functions as the Proton acceptor in the catalytic mechanism. NAD(+) is bound by residues 62–63 (DG), Lys67, 143–144 (ND), Lys173, and Asp175.

This sequence belongs to the NAD kinase family. Requires a divalent metal cation as cofactor.

It localises to the cytoplasm. The catalysed reaction is NAD(+) + ATP = ADP + NADP(+) + H(+). Its function is as follows. Involved in the regulation of the intracellular balance of NAD and NADP, and is a key enzyme in the biosynthesis of NADP. Catalyzes specifically the phosphorylation on 2'-hydroxyl of the adenosine moiety of NAD to yield NADP. The chain is NAD kinase 1 from Prochlorococcus marinus subsp. pastoris (strain CCMP1986 / NIES-2087 / MED4).